The sequence spans 432 residues: 5'-deoxyadenosine deaminase (432 aa).

Positions 63 and 65 each coordinate Zn(2+). Substrate is bound by residues Glu-92 and His-184. A Zn(2+)-binding site is contributed by His-211. Glu-214 and Asp-299 together coordinate substrate. Asp-299 lines the Zn(2+) pocket.

Belongs to the metallo-dependent hydrolases superfamily. MTA/SAH deaminase family. In terms of assembly, homotetramer. Requires Zn(2+) as cofactor.

The catalysed reaction is 5'-deoxyadenosine + H2O + H(+) = 5'-deoxyinosine + NH4(+). It carries out the reaction S-adenosyl-L-homocysteine + H2O + H(+) = S-inosyl-L-homocysteine + NH4(+). The enzyme catalyses S-methyl-5'-thioadenosine + H2O + H(+) = S-methyl-5'-thioinosine + NH4(+). It catalyses the reaction adenosine + H2O + H(+) = inosine + NH4(+). It functions in the pathway amino-acid biosynthesis; S-adenosyl-L-methionine biosynthesis. In terms of biological role, catalyzes the deamination of three SAM-derived enzymatic products, namely 5'-deoxyadenosine, S-adenosyl-L-homocysteine, and 5'-methylthioadenosine, to produce the inosine analogs. Can also deaminate adenosine. The preferred substrate for this enzyme is 5'-deoxyadenosine, but all these substrates are efficiently deaminated. Likely functions in a S-adenosyl-L-methionine (SAM) recycling pathway from S-adenosyl-L-homocysteine (SAH) produced from SAM-dependent methylation reactions. May also be involved in the recycling of 5'-deoxyadenosine, whereupon the 5'-deoxyribose moiety of 5'-deoxyinosine is further metabolized to deoxyhexoses used for the biosynthesis of aromatic amino acids in methanogens. The chain is 5'-deoxyadenosine deaminase from Methanosarcina mazei (strain ATCC BAA-159 / DSM 3647 / Goe1 / Go1 / JCM 11833 / OCM 88) (Methanosarcina frisia).